The sequence spans 440 residues: C4-dicarboxylate transport protein (440 aa).

Transmembrane regions (helical) follow at residues 7-29 (LYKSLYVQVLVAITIGILLGHYY), 49-66 (MVIAPIIFCTVVSGIAGM), 79-101 (ALLYFEIVSTIALIIGLVVVNVV), 143-165 (VVGAFANGDILQVLMFSVLFGFA), 186-208 (VMFNIINMIMKLAPIGAFGAMAF), 221-243 (LGYLMACFYITCLLFVLVVLGGI), 291-313 (VVGLVIPTGYSFNLDGTSIYLTM), 328-350 (ITHQITLLLVLLVASKGAAGVTG), and 355-377 (VLAATLSAVGHLPVAGLALILGI). The disordered stretch occupies residues 419–440 (GGAPLIDTRPTDDLGVAEGPAR).

This sequence belongs to the dicarboxylate/amino acid:cation symporter (DAACS) (TC 2.A.23) family.

It is found in the cell inner membrane. Responsible for the transport of dicarboxylates such as succinate, fumarate, and malate from the periplasm across the membrane. This is C4-dicarboxylate transport protein from Pseudomonas putida (strain ATCC 47054 / DSM 6125 / CFBP 8728 / NCIMB 11950 / KT2440).